Reading from the N-terminus, the 35-residue chain is Malate dehydrogenase, mitochondrial (35 aa).

Residue Asn7 coordinates NAD(+). Arg23 contributes to the substrate binding site.

Belongs to the LDH/MDH superfamily. MDH type 1 family. Homodimer.

The protein resides in the mitochondrion matrix. The catalysed reaction is (S)-malate + NAD(+) = oxaloacetate + NADH + H(+). The protein is Malate dehydrogenase, mitochondrial of Capsicum annuum var. annuum (Red pepper).